Here is a 515-residue protein sequence, read N- to C-terminus: Monocarboxylate transporter 10 (515 aa).

The segment at 1–48 (MVLSQEEPDSARGTSEAQPLGPAPTGAAPPPGPGPSDSPEAAVEKVEV) is disordered. The Cytoplasmic portion of the chain corresponds to 1-66 (MVLSQEEPDS…EPHEPPEPPE (66 aa)). The segment covering 17-26 (AQPLGPAPTG) has biased composition (low complexity). Positions 27–36 (AAPPPGPGPS) are enriched in pro residues. A helical transmembrane segment spans residues 67–87 (GGWGWLVMLAAMWCNGSVFGI). At 88 to 114 (QNACGVLFVSMLETFGSKDDDKMVFKT) the chain is on the extracellular side. The helical transmembrane segment at 115–135 (AWVGSLSMGMIFFCCPIVSVF) threads the bilayer. At 136 to 144 (TDLFGCRKT) the chain is on the cytoplasmic side. A helical transmembrane segment spans residues 145–165 (AVVGAAVGFVGLMSSSFVSSI). Topologically, residues 166-171 (EPLYLT) are extracellular. Residues 172–192 (YGIIFACGCSFAYQPSLVILG) form a helical membrane-spanning segment. Residues 193 to 200 (HYFKKRLG) lie on the Cytoplasmic side of the membrane. Residues 201-221 (LVNGIVTAGSSVFTILLPLLL) form a helical membrane-spanning segment. The Extracellular segment spans residues 222 to 228 (RVLIDSV). A helical transmembrane segment spans residues 229–249 (GLFYTLRVLCIFMFVLFLAGF). Residues 250-291 (TYRPLATSTKDKESGGSGSSLFSRKKFSPPKKIFNFAIFKVT) are Cytoplasmic-facing. S263 bears the Phosphoserine mark. The chain crosses the membrane as a helical span at residues 292–312 (AYAVWAVGIPLALFGYFVPYV). The Extracellular portion of the chain corresponds to 313–329 (HLMKHVNERFQDEKNKE). A helical transmembrane segment spans residues 330–350 (VVLMCIGVTSGVGRLLFGRIA). Position 351 (D351) is a topological domain, cytoplasmic. The helical transmembrane segment at 352–372 (YVPGVKKVYLQVLSFFFIGLM) threads the bilayer. Residues 373–396 (SMMIPLCSIFGALIAVCLIMGLFD) are Extracellular-facing. The helical transmembrane segment at 397–417 (GCFISIMAPIAFELVGAQDVS) threads the bilayer. Residues 418-419 (QA) are Cytoplasmic-facing. A helical membrane pass occupies residues 420–440 (IGFLLGFMSIPMTVGPPIAGL). Over 441–451 (LRDKLGSYDVA) the chain is Extracellular. Residues 452 to 472 (FYLAGVPPLIGGAVLCFIPWI) form a helical membrane-spanning segment. Over 473-515 (HSKKQREISKTTGKEKMEKMLENQNSLLSSSSGMFKKESDSII) the chain is Cytoplasmic. 4 positions are modified to phosphoserine: S498, S501, S503, and S504.

It belongs to the major facilitator superfamily. Monocarboxylate porter (TC 2.A.1.13) family. In terms of processing, not N-glycosylated. Strongly expressed in kidney and skeletal muscle and at lower level in placenta and heart.

The protein resides in the cell membrane. It is found in the basolateral cell membrane. It carries out the reaction 3,3',5-triiodo-L-thyronine(out) = 3,3',5-triiodo-L-thyronine(in). It catalyses the reaction L-thyroxine(out) = L-thyroxine(in). The enzyme catalyses L-tryptophan(in) = L-tryptophan(out). The catalysed reaction is L-tyrosine(in) = L-tyrosine(out). It carries out the reaction L-phenylalanine(in) = L-phenylalanine(out). Functionally, sodium- and proton-independent thyroid hormones and aromatic acids transporter. Mediates both uptake and efflux of 3,5,3'-triiodothyronine (T3) and 3,5,3',5'-tetraiodothyronine (T4) with high affinity, suggesting a role in the homeostasis of thyroid hormone levels. Responsible for low affinity bidirectional transport of the aromatic amino acids, such as phenylalanine, tyrosine, tryptophan and L-3,4-dihydroxyphenylalanine (L-dopa). Plays an important role in homeostasis of aromatic amino acids. This chain is Monocarboxylate transporter 10 (SLC16A10), found in Homo sapiens (Human).